The following is a 102-amino-acid chain: Urease subunit beta (102 aa).

It belongs to the urease beta subunit family. In terms of assembly, heterotrimer of UreA (gamma), UreB (beta) and UreC (alpha) subunits. Three heterotrimers associate to form the active enzyme.

The protein resides in the cytoplasm. The catalysed reaction is urea + 2 H2O + H(+) = hydrogencarbonate + 2 NH4(+). It participates in nitrogen metabolism; urea degradation; CO(2) and NH(3) from urea (urease route): step 1/1. This chain is Urease subunit beta, found in Clostridium perfringens.